The sequence spans 126 residues: Ribonuclease VapC23 (126 aa).

The 117-residue stretch at 2 to 118 (IFVDTNVFMY…GVTRIKTFDH (117 aa)) folds into the PINc domain. 2 residues coordinate Mg(2+): Asp-5 and Asp-98.

It belongs to the PINc/VapC protein family. Mg(2+) serves as cofactor.

Functionally, toxic component of a type II toxin-antitoxin (TA) system. An RNase. The cognate antitoxin is VapB23. The polypeptide is Ribonuclease VapC23 (Mycobacterium tuberculosis (strain CDC 1551 / Oshkosh)).